Reading from the N-terminus, the 243-residue chain is 7-carboxy-7-deazaguanine synthase (243 aa).

Residues 15-17 (IQG) and Arg30 contribute to the substrate site. The Radical SAM core domain maps to 21–239 (VIGQKTMFVR…PQLHTLLWGN (219 aa)). Residues Cys34, Cys38, and Cys41 each coordinate [4Fe-4S] cluster. Mg(2+) is bound at residue Ser43. Ser81 serves as a coordination point for substrate. S-adenosyl-L-methionine is bound by residues Gly83 and 127 to 129 (SPK).

Belongs to the radical SAM superfamily. 7-carboxy-7-deazaguanine synthase family. Homodimer. It depends on [4Fe-4S] cluster as a cofactor. The cofactor is S-adenosyl-L-methionine. Requires Mg(2+) as cofactor.

It carries out the reaction 6-carboxy-5,6,7,8-tetrahydropterin + H(+) = 7-carboxy-7-deazaguanine + NH4(+). It functions in the pathway purine metabolism; 7-cyano-7-deazaguanine biosynthesis. Catalyzes the complex heterocyclic radical-mediated conversion of 6-carboxy-5,6,7,8-tetrahydropterin (CPH4) to 7-carboxy-7-deazaguanine (CDG), a step common to the biosynthetic pathways of all 7-deazapurine-containing compounds. The chain is 7-carboxy-7-deazaguanine synthase from Bacillus subtilis (strain 168).